Here is a 226-residue protein sequence, read N- to C-terminus: 7-cyano-7-deazaguanine synthase (226 aa).

10–20 (LSGGLDSATAA) serves as a coordination point for ATP. Zn(2+) contacts are provided by cysteine 191, cysteine 199, cysteine 202, and cysteine 205.

The protein belongs to the QueC family. Zn(2+) is required as a cofactor.

The enzyme catalyses 7-carboxy-7-deazaguanine + NH4(+) + ATP = 7-cyano-7-deazaguanine + ADP + phosphate + H2O + H(+). It functions in the pathway purine metabolism; 7-cyano-7-deazaguanine biosynthesis. Functionally, catalyzes the ATP-dependent conversion of 7-carboxy-7-deazaguanine (CDG) to 7-cyano-7-deazaguanine (preQ(0)). In Parasynechococcus marenigrum (strain WH8102), this protein is 7-cyano-7-deazaguanine synthase.